Consider the following 254-residue polypeptide: Transmembrane protein 70, mitochondrial (254 aa).

A mitochondrion-targeting transit peptide spans 1–78 (MLFLALGGPW…PVCWERGVRC (78 aa)). The Mitochondrial matrix segment spans residues 79–112 (SHTQLDKSEDGRLIYTGNLARTVFGVKCFSYSTS). Residues 113-133 (LISLAFLPYIFAQNNVIFGSL) traverse the membrane as a helical segment. At 134-136 (PLQ) the chain is on the mitochondrial intermembrane side. The chain crosses the membrane as a helical span at residues 137–157 (ILFYGTIGSFTVITPALLHFL). Residues 158 to 254 (TKGYVIRLYH…SEKKQLKEEK (97 aa)) lie on the Mitochondrial matrix side of the membrane.

This sequence belongs to the TMEM70 family. As to quaternary structure, homooligomer. Interacts (homooligomer form) with ATP5MC1; this interaction facilitates the oligomer formation of subunit c/ATP5MC1 (c-ring) and the c-ring membrane insertion and also protects ATP5MC1 against intramitochondrial proteolysis. Interacts with the core subunits TMEM126B, NDUFAF1, ECSIT and ACAD9 of the MCIA complex. Interacts with ATP5MC3, TMEM242 and TIMMDC1.

It is found in the mitochondrion inner membrane. In terms of biological role, scaffold protein that participates in the c-ring assembly of mitochondrial ATP synthase (F(1)F(0) ATP synthase or complex V) by facilitating the membrane insertion and oligomer formation of the subunit c/ATP5MC1 through its interaction. Therefore, participates in the early stage of mitochondrial ATP synthase biogenesis and also protects subunit c/ATP5MC1 against intramitochondrial proteolysis. In addition, binds the mitochondrial proton-transporting ATP synthase complexes I and may play a role in the stability of its membrane-bound subassemblies. In Bos taurus (Bovine), this protein is Transmembrane protein 70, mitochondrial.